The sequence spans 121 residues: Small ribosomal subunit protein uS13 (121 aa).

Residues 97-121 are disordered; the sequence is VRGQRTRTNARTRRGARKTVAGKKK. The segment covering 100–121 has biased composition (basic residues); it reads QRTRTNARTRRGARKTVAGKKK.

This sequence belongs to the universal ribosomal protein uS13 family. As to quaternary structure, part of the 30S ribosomal subunit. Forms a loose heterodimer with protein S19. Forms two bridges to the 50S subunit in the 70S ribosome.

Its function is as follows. Located at the top of the head of the 30S subunit, it contacts several helices of the 16S rRNA. In the 70S ribosome it contacts the 23S rRNA (bridge B1a) and protein L5 of the 50S subunit (bridge B1b), connecting the 2 subunits; these bridges are implicated in subunit movement. Contacts the tRNAs in the A and P-sites. The protein is Small ribosomal subunit protein uS13 of Synechococcus sp. (strain WH7803).